The sequence spans 458 residues: Ribosomal protein uS12 methylthiotransferase RimO (458 aa).

Residues 6–116 enclose the MTTase N-terminal domain; sequence PKVGFVSLGC…VMEAVHAALP (111 aa). 6 residues coordinate [4Fe-4S] cluster: cysteine 15, cysteine 51, cysteine 80, cysteine 147, cysteine 151, and cysteine 154. The Radical SAM core domain occupies 133 to 371; the sequence is LTPRHYAYLK…AKQAQISALR (239 aa). The TRAM domain maps to 373 to 441; that stretch reads ESKIGSVQQC…EHDLFGDALP (69 aa).

The protein belongs to the methylthiotransferase family. RimO subfamily. Requires [4Fe-4S] cluster as cofactor.

The protein resides in the cytoplasm. The catalysed reaction is L-aspartate(89)-[ribosomal protein uS12]-hydrogen + (sulfur carrier)-SH + AH2 + 2 S-adenosyl-L-methionine = 3-methylsulfanyl-L-aspartate(89)-[ribosomal protein uS12]-hydrogen + (sulfur carrier)-H + 5'-deoxyadenosine + L-methionine + A + S-adenosyl-L-homocysteine + 2 H(+). Its function is as follows. Catalyzes the methylthiolation of an aspartic acid residue of ribosomal protein uS12. The chain is Ribosomal protein uS12 methylthiotransferase RimO from Xanthomonas euvesicatoria pv. vesicatoria (strain 85-10) (Xanthomonas campestris pv. vesicatoria).